We begin with the raw amino-acid sequence, 157 residues long: SsrA-binding protein (157 aa).

The disordered stretch occupies residues 130-157; the sequence is KAEHDKRDTIKEREGKREVERVMKSRHR.

The protein belongs to the SmpB family.

It is found in the cytoplasm. Required for rescue of stalled ribosomes mediated by trans-translation. Binds to transfer-messenger RNA (tmRNA), required for stable association of tmRNA with ribosomes. tmRNA and SmpB together mimic tRNA shape, replacing the anticodon stem-loop with SmpB. tmRNA is encoded by the ssrA gene; the 2 termini fold to resemble tRNA(Ala) and it encodes a 'tag peptide', a short internal open reading frame. During trans-translation Ala-aminoacylated tmRNA acts like a tRNA, entering the A-site of stalled ribosomes, displacing the stalled mRNA. The ribosome then switches to translate the ORF on the tmRNA; the nascent peptide is terminated with the 'tag peptide' encoded by the tmRNA and targeted for degradation. The ribosome is freed to recommence translation, which seems to be the essential function of trans-translation. This chain is SsrA-binding protein, found in Acidovorax sp. (strain JS42).